A 656-amino-acid polypeptide reads, in one-letter code: tRNA 5-methylaminomethyl-2-thiouridine biosynthesis bifunctional protein MnmC (656 aa).

The segment at 1–236 (MTDPLIPAVL…KRAMLVGHFA (236 aa)) is tRNA (mnm(5)s(2)U34)-methyltransferase. The FAD-dependent cmnm(5)s(2)U34 oxidoreductase stretch occupies residues 260–656 (IGAGLAGCAV…LRALRQGAVS (397 aa)).

In the N-terminal section; belongs to the methyltransferase superfamily. tRNA (mnm(5)s(2)U34)-methyltransferase family. It in the C-terminal section; belongs to the DAO family. Requires FAD as cofactor.

It is found in the cytoplasm. It carries out the reaction 5-aminomethyl-2-thiouridine(34) in tRNA + S-adenosyl-L-methionine = 5-methylaminomethyl-2-thiouridine(34) in tRNA + S-adenosyl-L-homocysteine + H(+). Catalyzes the last two steps in the biosynthesis of 5-methylaminomethyl-2-thiouridine (mnm(5)s(2)U) at the wobble position (U34) in tRNA. Catalyzes the FAD-dependent demodification of cmnm(5)s(2)U34 to nm(5)s(2)U34, followed by the transfer of a methyl group from S-adenosyl-L-methionine to nm(5)s(2)U34, to form mnm(5)s(2)U34. This is tRNA 5-methylaminomethyl-2-thiouridine biosynthesis bifunctional protein MnmC from Paraburkholderia phytofirmans (strain DSM 17436 / LMG 22146 / PsJN) (Burkholderia phytofirmans).